The chain runs to 275 residues: Dermonecrotic toxin SpeSicTox-betaIIA2ii (275 aa).

H5 is a catalytic residue. Mg(2+) is bound by residues E25 and D27. The Nucleophile role is filled by H41. Intrachain disulfides connect C45–C51 and C47–C190. Residue D85 participates in Mg(2+) binding.

The protein belongs to the arthropod phospholipase D family. Class II subfamily. It depends on Mg(2+) as a cofactor. As to expression, expressed by the venom gland.

It is found in the secreted. The enzyme catalyses an N-(acyl)-sphingosylphosphocholine = an N-(acyl)-sphingosyl-1,3-cyclic phosphate + choline. It catalyses the reaction an N-(acyl)-sphingosylphosphoethanolamine = an N-(acyl)-sphingosyl-1,3-cyclic phosphate + ethanolamine. The catalysed reaction is a 1-acyl-sn-glycero-3-phosphocholine = a 1-acyl-sn-glycero-2,3-cyclic phosphate + choline. It carries out the reaction a 1-acyl-sn-glycero-3-phosphoethanolamine = a 1-acyl-sn-glycero-2,3-cyclic phosphate + ethanolamine. Dermonecrotic toxins cleave the phosphodiester linkage between the phosphate and headgroup of certain phospholipids (sphingolipid and lysolipid substrates), forming an alcohol (often choline) and a cyclic phosphate. This toxin acts on sphingomyelin (SM). It may also act on ceramide phosphoethanolamine (CPE), lysophosphatidylcholine (LPC) and lysophosphatidylethanolamine (LPE), but not on lysophosphatidylserine (LPS), and lysophosphatidylglycerol (LPG). It acts by transphosphatidylation, releasing exclusively cyclic phosphate products as second products. Induces dermonecrosis, hemolysis, increased vascular permeability, edema, inflammatory response, and platelet aggregation. The polypeptide is Dermonecrotic toxin SpeSicTox-betaIIA2ii (Sicarius peruensis (Six-eyed sand spider)).